The chain runs to 855 residues: MIRAKHISNLSSSARSFFLSGSRPSAADGNSCTCAEDESGVSKRQQIRTEVVQTGKRASNLAAGLAGSILPVEAGKPLVVPKTVEHFTRPSLLPQHVSSPALPGKADSVNHASAIIKEDVGVPIGDQIFKAGIGNVNLLSDIANYKIPLSDGTEVVGLPKSCMVDPTRPISGVKSSNVKVIRREHLAKVYPRSADRVPINSSPGTKQASNDVAGKSFEAHDLLSNNVSGKRKIMPQRPYTDSTRYASGGCDYSVHSSDDRTIISSVEGFGKPSREMMKVTPRTAPTPRQHCNPGYVVENVSSILRRFKWGHAAEEALHNFGFRMDAYQANQVLKQMDNYANALGFFYWLKRQPGFKHDGHTYTTMVGNLGRAKQFGEINKLLDEMVRDGCKPNTVTYNRLIHSYGRANYLKEAMNVFNQMQEAGCEPDRVTYCTLIDIHAKAGFLDIAMDMYQRMQEAGLSPDTFTYSVIINCLGKAGHLPAAHRLFCEMVGQGCTPNLVTFNIMIALHAKARNYETALKLYRDMQNAGFQPDKVTYSIVMEVLGHCGFLEEAEGVFAEMQRKNWVPDEPVYGLLVDLWGKAGNVDKAWQWYQAMLQAGLRPNVPTCNSLLSTFLRVHRMSEAYNLLQSMLALGLHPSLQTYTLLLSCCTDARSNFDMGFCGQLMAVSGHPAHMFLLKMPPAGPDGQKVRDHVSNFLDFMHSEDRESKRGLMDAVVDFLHKSGLKEEAGSVWEVAAGKNVYPDALREKSYSYWLINLHVMSEGTAVIALSRTLAWFRKQMLVSGDCPSRIDIVTGWGRRSRVTGTSMVRQAVEELLNIFNFPFFTENGNSGCFVGSGEPLKNWLLESYVERMHLL.

The interval 21-40 (GSRPSAADGNSCTCAEDESG) is disordered. PPR repeat units follow at residues 358 to 392 (DGHT…GCKP), 393 to 427 (NTVT…GCEP), 428 to 462 (DRVT…GLSP), 463 to 497 (DTFT…GCTP), 498 to 532 (NLVT…GFQP), 533 to 567 (DKVT…NWVP), 568 to 602 (DEPV…GLRP), and 603 to 637 (NVPT…GLHP). The 84-residue stretch at 755–838 (INLHVMSEGT…NSGCFVGSGE (84 aa)) folds into the Smr domain.

This sequence belongs to the PPR family. P subfamily.

In Arabidopsis thaliana (Mouse-ear cress), this protein is Pentatricopeptide repeat-containing protein At1g74750.